The sequence spans 470 residues: Alpha-1A adrenergic receptor (470 aa).

Residues 1–27 (MTPSSVTLNCSNCSHVLAPELNTVKAV) are Extracellular-facing. 2 N-linked (GlcNAc...) asparagine glycosylation sites follow: N9 and N12. The helical transmembrane segment at 28–51 (VLGMVLGIFILFGVIGNILVILSV) threads the bilayer. The Cytoplasmic segment spans residues 52-64 (VCHRHLQTVTYYF). Residues 65-88 (IVNLAVADLLLSSTVLPFSAIFEI) form a helical membrane-spanning segment. Topologically, residues 89–99 (LDRWVFGRVFC) are extracellular. C99 and C176 are disulfide-bonded. A helical membrane pass occupies residues 100–122 (NIWAAVDVLCCTASIMSLCVISV). Over 123–143 (DRYIGVSYPLRYPAIMTKRRA) the chain is Cytoplasmic. Residues 144–167 (LLAVMLLWVLSVIISIGPLFGWKE) traverse the membrane as a helical segment. At 168-181 (PAPEDETVCKITEE) the chain is on the extracellular side. The chain crosses the membrane as a helical span at residues 182–205 (PGYAIFSAVGSFYLPLAIILAMYC). The Cytoplasmic segment spans residues 206–271 (RVYVVAQKES…FSREKKAAKT (66 aa)). A helical transmembrane segment spans residues 272–295 (LGIVVGCFVLCWLPFFLVLPIGSI). Residues 296 to 303 (FPAYRPSD) are Extracellular-facing. The helical transmembrane segment at 304-327 (TVFKITFWLGYFNSCINPIIYLCS) threads the bilayer. Over 328–470 (NQEFKKAFQS…LSLSEKGESV (143 aa)) the chain is Cytoplasmic. The S-palmitoyl cysteine moiety is linked to residue C343. The disordered stretch occupies residues 375 to 416 (GAPCRLSPSSSVALSRTPSSRDSREWRVFSGGPINSGPGPTE). Over residues 381–392 (SPSSSVALSRTP) the composition is skewed to polar residues.

It belongs to the G-protein coupled receptor 1 family. Adrenergic receptor subfamily. ADRA1A sub-subfamily.

It is found in the cell membrane. Its function is as follows. This alpha-adrenergic receptor mediates its action by association with G proteins that activate a phosphatidylinositol-calcium second messenger system. The polypeptide is Alpha-1A adrenergic receptor (adra1a) (Oryzias latipes (Japanese rice fish)).